Reading from the N-terminus, the 327-residue chain is Biotin synthase (327 aa).

Positions 48-278 constitute a Radical SAM core domain; it reads YCGDGVGLCM…DRHITVCGGR (231 aa). The [4Fe-4S] cluster site is built by Cys66, Cys70, and Cys73. The [2Fe-2S] cluster site is built by Ser143 and Cys203.

It belongs to the radical SAM superfamily. Biotin synthase family. In terms of assembly, homodimer. Requires [4Fe-4S] cluster as cofactor. The cofactor is [2Fe-2S] cluster.

It carries out the reaction (4R,5S)-dethiobiotin + (sulfur carrier)-SH + 2 reduced [2Fe-2S]-[ferredoxin] + 2 S-adenosyl-L-methionine = (sulfur carrier)-H + biotin + 2 5'-deoxyadenosine + 2 L-methionine + 2 oxidized [2Fe-2S]-[ferredoxin]. The protein operates within cofactor biosynthesis; biotin biosynthesis; biotin from 7,8-diaminononanoate: step 2/2. Catalyzes the conversion of dethiobiotin (DTB) to biotin by the insertion of a sulfur atom into dethiobiotin via a radical-based mechanism. In Syntrophotalea carbinolica (strain DSM 2380 / NBRC 103641 / GraBd1) (Pelobacter carbinolicus), this protein is Biotin synthase.